A 124-amino-acid polypeptide reads, in one-letter code: S-adenosylmethionine decarboxylase proenzyme (124 aa).

Ser-63 (schiff-base intermediate with substrate; via pyruvic acid) is an active-site residue. A Pyruvic acid (Ser); by autocatalysis modification is found at Ser-63. His-68 acts as the Proton acceptor; for processing activity in catalysis. Cys-83 serves as the catalytic Proton donor; for catalytic activity.

It belongs to the prokaryotic AdoMetDC family. Type 1 subfamily. As to quaternary structure, heterotetramer of two alpha and two beta chains arranged as a dimer of alpha/beta heterodimers. The cofactor is pyruvate. Is synthesized initially as an inactive proenzyme. Formation of the active enzyme involves a self-maturation process in which the active site pyruvoyl group is generated from an internal serine residue via an autocatalytic post-translational modification. Two non-identical subunits are generated from the proenzyme in this reaction, and the pyruvate is formed at the N-terminus of the alpha chain, which is derived from the carboxyl end of the proenzyme. The post-translation cleavage follows an unusual pathway, termed non-hydrolytic serinolysis, in which the side chain hydroxyl group of the serine supplies its oxygen atom to form the C-terminus of the beta chain, while the remainder of the serine residue undergoes an oxidative deamination to produce ammonia and the pyruvoyl group blocking the N-terminus of the alpha chain.

It carries out the reaction S-adenosyl-L-methionine + H(+) = S-adenosyl 3-(methylsulfanyl)propylamine + CO2. It functions in the pathway amine and polyamine biosynthesis; S-adenosylmethioninamine biosynthesis; S-adenosylmethioninamine from S-adenosyl-L-methionine: step 1/1. Catalyzes the decarboxylation of S-adenosylmethionine to S-adenosylmethioninamine (dcAdoMet), the propylamine donor required for the synthesis of the polyamines spermine and spermidine from the diamine putrescine. In Anoxybacillus flavithermus (strain DSM 21510 / WK1), this protein is S-adenosylmethionine decarboxylase proenzyme.